The primary structure comprises 199 residues: Large ribosomal subunit protein uL10 (199 aa).

The protein belongs to the universal ribosomal protein uL10 family. In terms of assembly, part of the ribosomal stalk of the 50S ribosomal subunit. The N-terminus interacts with L11 and the large rRNA to form the base of the stalk. The C-terminus forms an elongated spine to which L12 dimers bind in a sequential fashion forming a multimeric L10(L12)X complex.

Its function is as follows. Forms part of the ribosomal stalk, playing a central role in the interaction of the ribosome with GTP-bound translation factors. The sequence is that of Large ribosomal subunit protein uL10 (rplJ) from Aquifex aeolicus (strain VF5).